A 322-amino-acid polypeptide reads, in one-letter code: Beta-ketoacyl-[acyl-carrier-protein] synthase III (322 aa).

Active-site residues include cysteine 113 and histidine 249. Residues glutamine 250–arginine 254 are ACP-binding. Residue asparagine 279 is part of the active site.

Belongs to the thiolase-like superfamily. FabH family. Homodimer.

The protein localises to the cytoplasm. The catalysed reaction is malonyl-[ACP] + acetyl-CoA + H(+) = 3-oxobutanoyl-[ACP] + CO2 + CoA. The protein operates within lipid metabolism; fatty acid biosynthesis. Catalyzes the condensation reaction of fatty acid synthesis by the addition to an acyl acceptor of two carbons from malonyl-ACP. Catalyzes the first condensation reaction which initiates fatty acid synthesis and may therefore play a role in governing the total rate of fatty acid production. Possesses both acetoacetyl-ACP synthase and acetyl transacylase activities. Its substrate specificity determines the biosynthesis of branched-chain and/or straight-chain of fatty acids. The chain is Beta-ketoacyl-[acyl-carrier-protein] synthase III from Thioalkalivibrio sulfidiphilus (strain HL-EbGR7).